A 257-amino-acid chain; its full sequence is Beta-fibrinogenase (257 aa).

An N-terminal signal peptide occupies residues 1–18; that stretch reads MVLIRVLANLLLLQLSHA. The propeptide occupies 19–24; it reads QKSSEL. Residues 25–248 enclose the Peptidase S1 domain; that stretch reads VVGGDECNIN…YTDWIQSIIA (224 aa). Intrachain disulfides connect Cys-31-Cys-162, Cys-49-Cys-65, Cys-97-Cys-255, Cys-141-Cys-209, Cys-173-Cys-188, and Cys-199-Cys-224. Asn-44 carries N-linked (GlcNAc...) asparagine glycosylation. His-64 acts as the Charge relay system in catalysis. N-linked (GlcNAc...) asparagine glycans are attached at residues Asn-78 and Asn-102. Asp-109 functions as the Charge relay system in the catalytic mechanism. Residues Asn-153 and Asn-169 are each glycosylated (N-linked (GlcNAc...) asparagine). The active-site Charge relay system is the Ser-203. A glycan (N-linked (GlcNAc...) asparagine) is linked at Asn-250.

In terms of assembly, monomer. Glycosylated. Contains 23.0% of hexoses, 8.3% of hexosamines and 1.0% of sialic acids. In terms of tissue distribution, expressed by the venom gland.

The protein localises to the secreted. With respect to regulation, inhibited by diisopropylfluorophosphate (DFP) and PMSF. Its function is as follows. Snake venom serine protease that has fibrinogenolytic activities by hydrolyzing the beta chain of fibrinogen (FGB). Typical arginine esterase which hydrolyzes esters and amides of arginine. The chain is Beta-fibrinogenase from Macrovipera lebetinus (Levantine viper).